Consider the following 897-residue polypeptide: Molybdenum import ATP-binding protein ModC 2 (897 aa).

Residues 6 to 236 (RGRIDAAFRG…PALPLAYSRD (231 aa)) form the ABC transporter domain. ATP is bound at residue 38 to 45 (GPSGCGKT). A Mop domain is found at 295-365 (ESSILNILPA…VKGVSLVRAS (71 aa)). Positions 823–848 (LGDRSVLGPREPDAGAKGRKRQNDPE) are disordered. A compositionally biased stretch (basic and acidic residues) spans 832–848 (REPDAGAKGRKRQNDPE).

This sequence belongs to the ABC transporter superfamily. Molybdate importer (TC 3.A.1.8) family. In terms of assembly, the complex is composed of two ATP-binding proteins (ModC), two transmembrane proteins (ModB) and a solute-binding protein (ModA).

Its subcellular location is the cell inner membrane. The enzyme catalyses molybdate(out) + ATP + H2O = molybdate(in) + ADP + phosphate + H(+). Its function is as follows. Part of the ABC transporter complex ModABC involved in molybdenum import. Responsible for energy coupling to the transport system. The sequence is that of Molybdenum import ATP-binding protein ModC 2 from Bradyrhizobium diazoefficiens (strain JCM 10833 / BCRC 13528 / IAM 13628 / NBRC 14792 / USDA 110).